The primary structure comprises 257 residues: Tryptophan synthase alpha chain (257 aa).

Catalysis depends on proton acceptor residues glutamate 51 and aspartate 62.

Belongs to the TrpA family. As to quaternary structure, tetramer of two alpha and two beta chains.

It catalyses the reaction (1S,2R)-1-C-(indol-3-yl)glycerol 3-phosphate + L-serine = D-glyceraldehyde 3-phosphate + L-tryptophan + H2O. Its pathway is amino-acid biosynthesis; L-tryptophan biosynthesis; L-tryptophan from chorismate: step 5/5. Its function is as follows. The alpha subunit is responsible for the aldol cleavage of indoleglycerol phosphate to indole and glyceraldehyde 3-phosphate. The sequence is that of Tryptophan synthase alpha chain from Nitratidesulfovibrio vulgaris (strain ATCC 29579 / DSM 644 / CCUG 34227 / NCIMB 8303 / VKM B-1760 / Hildenborough) (Desulfovibrio vulgaris).